The primary structure comprises 175 residues: uncharacterized protein (175 aa).

This is an uncharacterized protein from Mycobacterium tuberculosis (strain ATCC 25618 / H37Rv).